The primary structure comprises 710 residues: PC3-like endoprotease variant B (710 aa).

The signal sequence occupies residues 1-29; that stretch reads MNYRGIYRRRYVFVLLLLVAVVNISYGWT. 3 N-linked (GlcNAc...) asparagine glycosylation sites follow: Asn23, Asn62, and Asn190. A propeptide spanning residues 30-152 is cleaved from the precursor; the sequence is VLKNKDYKRR…QQKILERVKR (123 aa). Positions 164–486 constitute a Peptidase S8 domain; it reads MWYLLNTGQA…FGRLDANAMV (323 aa). Residues Asp202 and His242 each act as charge relay system in the active site. Cystine bridges form between Cys259-Cys411 and Cys351-Cys381. The Charge relay system role is filled by Ser419. The 144-residue stretch at 495–638 folds into the P/Homo B domain; the sequence is LPAQRKCTAA…EERVIDTQTK (144 aa). A disulfide bridge links Cys501 with Cys527. Positions 668–710 are disordered; it reads TIEGSTQDHVKPKEGAKEPWGNYRNTNNINNNSSTAFKRKKKQ. Residues 673-684 are compositionally biased toward basic and acidic residues; that stretch reads TQDHVKPKEGAK. A compositionally biased stretch (low complexity) spans 689–699; sequence NYRNTNNINNN. Asn698 and Asn699 each carry an N-linked (GlcNAc...) asparagine glycan.

This sequence belongs to the peptidase S8 family. Furin subfamily. In terms of tissue distribution, predominantly in the body column.

Its function is as follows. Probably involved in the processing of hormone and other protein precursors at sites comprised of pairs of basic amino acid residues. In Hydra vulgaris (Hydra), this protein is PC3-like endoprotease variant B.